We begin with the raw amino-acid sequence, 393 residues long: Venom metalloproteinase BumaMPs1 (393 aa).

A signal peptide spans 1 to 15 (MFVHLLVLLFAAVEA). An N-linked (GlcNAc...) asparagine glycan is attached at asparagine 158. In terms of domain architecture, Peptidase M12B spans 167–377 (KCVKIEYVFV…RVEELITRRK (211 aa)). Histidine 323 lines the Zn(2+) pocket. Residue glutamate 324 is part of the active site. Zn(2+) contacts are provided by histidine 327 and histidine 333. A disintegrin-like domain region spans residues 378–393 (INHCIVETCDGKRKRN).

The protein belongs to the venom metalloproteinase (M12B) family. Zn(2+) serves as cofactor. In terms of processing, contains several disulfide bonds. In terms of tissue distribution, expressed by the venom gland.

The protein resides in the secreted. Functionally, metalloprotease. The protein is Venom metalloproteinase BumaMPs1 of Olivierus martensii (Manchurian scorpion).